The sequence spans 319 residues: CCAAT/enhancer-binding protein homolog 1 (319 aa).

A n' domain; required for axon regeneration region spans residues 53-67 (SLTIAASLQQRDRER). The disordered stretch occupies residues 163–319 (TRRAVKRPVP…QRHILENFNK (157 aa)). Positions 171–181 (VPYDDYQKEYS) are enriched in basic and acidic residues. Acidic residues predominate over residues 182-198 (EESSDMTDNDGSVDDSY). Composition is skewed to basic and acidic residues over residues 225–248 (LKADEEKAEPTYKLKRARNNDAVR), 255–274 (KELQDKKEAEHDKMKRRIAE), 281–291 (SERDARRRDQD), and 302–319 (PMKEQRMPQRHILENFNK). The region spanning 233 to 308 (EPTYKLKRAR…NKGPMKEQRM (76 aa)) is the bZIP domain. A basic motif region spans residues 237–271 (KLKRARNNDAVRKSRKKAKELQDKKEAEHDKMKRR). Positions 275–308 (LEGLLQSERDARRRDQDTLEQLLRNKGPMKEQRM) are leucine-zipper.

Belongs to the bZIP family. C/EBP subfamily. In terms of assembly, may interact with transcription factor ets-4. May interact (via N-terminus) with nipi-3. May interact (via N-terminus) with importin subunit alpha ima-3. In terms of tissue distribution, expressed in touch and motor neurons.

It localises to the synapse. Its subcellular location is the cytoplasm. The protein localises to the nucleus. It is found in the cell projection. The protein resides in the axon. Functionally, transcription factor. Binds to promoter regions of target genes, perhaps at the motif 5'-[AGCT]TT[AGT][TC]GAAA[ACT]-3'. Modulates expression of genes involved in development and in stress responses, including those regulating the p38/MAPK signaling pathways such as MAPKK sek-1 and phosphatase vhp-1. Involved in innate immunity. Plays a role in repressing the response to infection by the Gram-negative bacterium P.aeruginosa, perhaps acting independently of the pmk-1 or pmk-3 p38/MAPK pathways. However, also plays a protective role in the response to infection by P.aeruginosa. Required in axonal regrowth following injury and synaptogenesis. Following axon injury, in concert with transcription factor ets-4, activates expression of receptor tyrosine kinase svh-2. May function downstream of the Ca2+-activated p38/MAPK pathway to promote axon regeneration. Plays a role in modulating polymerization of neuronal microtubules. Involved in modulating lipid homeostasis. This chain is CCAAT/enhancer-binding protein homolog 1, found in Caenorhabditis elegans.